The chain runs to 203 residues: A-type ATP synthase subunit E (203 aa).

It belongs to the V-ATPase E subunit family. In terms of assembly, has multiple subunits with at least A(3), B(3), C, D, E, F, H, I and proteolipid K(x).

Its subcellular location is the cell membrane. Component of the A-type ATP synthase that produces ATP from ADP in the presence of a proton gradient across the membrane. This chain is A-type ATP synthase subunit E, found in Methanococcus maripaludis (strain DSM 14266 / JCM 13030 / NBRC 101832 / S2 / LL).